Reading from the N-terminus, the 1026-residue chain is Multidrug resistance protein MdtC (1026 aa).

11 helical membrane passes run Leu16–Pro36, Glu333–Leu353, Leu360–Cys380, Leu387–Leu407, Val435–Ile455, Leu459–Leu479, Trp528–Pro548, Leu853–Ser873, Leu897–Val917, Pro953–Gly973, and Ile984–Val1004.

This sequence belongs to the resistance-nodulation-cell division (RND) (TC 2.A.6) family. MdtC subfamily. As to quaternary structure, part of a tripartite efflux system composed of MdtA, MdtB and MdtC. MdtC forms a heteromultimer with MdtB.

It is found in the cell inner membrane. The sequence is that of Multidrug resistance protein MdtC from Edwardsiella ictaluri (strain 93-146).